The following is an 88-amino-acid chain: MASLVPLKEKKLMEVKLGELPSWIMMRDFTPSGIAGAFRRGYDRYYNKYINVRKGSISGISMVLAAYVVFSYCISYKELKHERRRKYH.

Residue A2 is modified to N-acetylalanine. At S3 the chain carries Phosphoserine. At K16 the chain carries N6-acetyllysine. Residues 62–79 (MVLAAYVVFSYCISYKEL) form a helical membrane-spanning segment.

It belongs to the ATPase F chain family. Component of the ATP synthase complex composed at least of ATP5F1A/subunit alpha, ATP5F1B/subunit beta, ATP5MC1/subunit c (homooctomer), MT-ATP6/subunit a, MT-ATP8/subunit 8, ATP5ME/subunit e, ATP5MF/subunit f, ATP5MG/subunit g, ATP5MK/subunit k, ATP5MJ/subunit j, ATP5F1C/subunit gamma, ATP5F1D/subunit delta, ATP5F1E/subunit epsilon, ATP5PF/subunit F6, ATP5PB/subunit b, ATP5PD/subunit d, ATP5PO/subunit OSCP. ATP synthase complex consists of a soluble F(1) head domain (subunits alpha(3) and beta(3)) - the catalytic core - and a membrane F(0) domain - the membrane proton channel (subunits c, a, 8, e, f, g, k and j). These two domains are linked by a central stalk (subunits gamma, delta, and epsilon) rotating inside the F1 region and a stationary peripheral stalk (subunits F6, b, d, and OSCP).

Its subcellular location is the mitochondrion. It localises to the mitochondrion inner membrane. Functionally, subunit f, of the mitochondrial membrane ATP synthase complex (F(1)F(0) ATP synthase or Complex V) that produces ATP from ADP in the presence of a proton gradient across the membrane which is generated by electron transport complexes of the respiratory chain. ATP synthase complex consist of a soluble F(1) head domain - the catalytic core - and a membrane F(1) domain - the membrane proton channel. These two domains are linked by a central stalk rotating inside the F(1) region and a stationary peripheral stalk. During catalysis, ATP synthesis in the catalytic domain of F(1) is coupled via a rotary mechanism of the central stalk subunits to proton translocation. In vivo, can only synthesize ATP although its ATP hydrolase activity can be activated artificially in vitro. Part of the complex F(0) domain. This Mus musculus (Mouse) protein is ATP synthase F(0) complex subunit f, mitochondrial.